The following is a 444-amino-acid chain: MREILHIQGGQCGNQIGAKFWEVICGEHGIDQTGQSCGDTDLQLERINVYFNEASGGKYVPRAVLMDLEPGTMDSLRSGPFGQIFRPDNFVFGQSGAGNNWAKGHYTEGAELIDSVLDVVRKEAENCDCLQGFQVCHSLGGGTGSGMGTLLISKIREEYPDRMMMTFSVFPSPKVSDTVVEPYNATLSVHQLVENADECMVLDNEALYDICFRTLKLANPTFGDLNHLISATMSGVTCCLRFPGQLNSDLRKLAVNLIPFPRLHFFMVGFAPLTSRGSQQYSALSVPELTQQMWDAKNMMCAADPRHGRYLTASAVFRGKMSTKEVDEQMMNVQNKNSSYFVEWIPNNVKSSVCDIAPTGLKMASTFIGNSTSIQEMFRRVSEQFTAMFRRKAFLHWYTGEGMDEMEFTEAESNMNDLVAEYQQYQDATVGEEEYEEDEEEEEA.

GTP contacts are provided by Q11, E69, S138, G142, T143, G144, N204, and N226. Residue E69 coordinates Mg(2+).

It belongs to the tubulin family. Dimer of alpha and beta chains. A typical microtubule is a hollow water-filled tube with an outer diameter of 25 nm and an inner diameter of 15 nM. Alpha-beta heterodimers associate head-to-tail to form protofilaments running lengthwise along the microtubule wall with the beta-tubulin subunit facing the microtubule plus end conferring a structural polarity. Microtubules usually have 13 protofilaments but different protofilament numbers can be found in some organisms and specialized cells. Interacts with TFCA. The cofactor is Mg(2+).

The protein resides in the cytoplasm. Its subcellular location is the cytoskeleton. Tubulin is the major constituent of microtubules, a cylinder consisting of laterally associated linear protofilaments composed of alpha- and beta-tubulin heterodimers. Microtubules grow by the addition of GTP-tubulin dimers to the microtubule end, where a stabilizing cap forms. Below the cap, tubulin dimers are in GDP-bound state, owing to GTPase activity of alpha-tubulin. This Arabidopsis thaliana (Mouse-ear cress) protein is Tubulin beta-9 chain (TUBB9).